A 434-amino-acid chain; its full sequence is F-box/LRR-repeat protein 21 (434 aa).

Residues 39–85 (LLDWGNLPHHVVLRIFQYLPLIDRARASSVCRRWNEVFHIPDLWRKF) enclose the F-box domain. LRR repeat units follow at residues 187–213 (DTPV…KMSS), 214–239 (CPHV…ALNY), 242–265 (LSDK…RIDV), 322–347 (GRSV…VVCA), 349–374 (GIQV…GLSE), and 375–400 (CEVS…SIME).

As to quaternary structure, part of the SCF (SKP1-CUL1-F-box) E3 ubiquitin-protein ligase complex SCF(FBXL21) composed of CUL1, SKP1, RBX1 and FBXL21. Interacts with CRY1 and CRY2.

It is found in the cytoplasm. The protein localises to the cytosol. The protein resides in the nucleus. The protein operates within protein modification; protein ubiquitination. Functionally, substrate-recognition component of the SCF(FBXL21) E3 ubiquitin ligase complex involved in circadian rhythm function. Plays a key role in the maintenance of both the speed and the robustness of the circadian clock oscillation. The SCF(FBXL21) complex mainly acts in the cytosol and mediates ubiquitination of CRY proteins (CRY1 and CRY2), leading to CRY proteins stabilization. The SCF(FBXL21) complex counteracts the activity of the SCF(FBXL3) complex and protects CRY proteins from degradation. Involved in the hypothalamic suprachiasmatic nucleus (SCN) clock regulating temporal organization of the daily activities. This is F-box/LRR-repeat protein 21 (FBXL21) from Bos taurus (Bovine).